The sequence spans 433 residues: Enolase (433 aa).

(2R)-2-phosphoglycerate is bound at residue glutamine 167. Catalysis depends on glutamate 209, which acts as the Proton donor. Mg(2+) is bound by residues aspartate 246, glutamate 291, and aspartate 318. Residues lysine 343, arginine 372, serine 373, and lysine 394 each coordinate (2R)-2-phosphoglycerate. Catalysis depends on lysine 343, which acts as the Proton acceptor.

This sequence belongs to the enolase family. In terms of assembly, component of the RNA degradosome, a multiprotein complex involved in RNA processing and mRNA degradation. The cofactor is Mg(2+).

It is found in the cytoplasm. It localises to the secreted. The protein resides in the cell surface. It carries out the reaction (2R)-2-phosphoglycerate = phosphoenolpyruvate + H2O. It functions in the pathway carbohydrate degradation; glycolysis; pyruvate from D-glyceraldehyde 3-phosphate: step 4/5. Its function is as follows. Catalyzes the reversible conversion of 2-phosphoglycerate (2-PG) into phosphoenolpyruvate (PEP). It is essential for the degradation of carbohydrates via glycolysis. In Tolumonas auensis (strain DSM 9187 / NBRC 110442 / TA 4), this protein is Enolase.